Here is a 120-residue protein sequence, read N- to C-terminus: MFALPGYDAFLGFLLIAAAVPVLALVTNKLVAPKSRAGERQLTYESGMEPIGGAWIQFNIRYYMFALVFVIFDVETVFLYPWAVAFNRLGLLAFIEALIFIAILLVALAYAWRKGALEWS.

The next 3 membrane-spanning stretches (helical) occupy residues 6 to 26 (GYDAFLGFLLIAAAVPVLALV), 64 to 84 (MFALVFVIFDVETVFLYPWAV), and 89 to 109 (LGLLAFIEALIFIAILLVALA).

Belongs to the complex I subunit 3 family. NDH-1 can be composed of about 15 different subunits; different subcomplexes with different compositions have been identified which probably have different functions.

It localises to the cellular thylakoid membrane. It carries out the reaction a plastoquinone + NADH + (n+1) H(+)(in) = a plastoquinol + NAD(+) + n H(+)(out). The enzyme catalyses a plastoquinone + NADPH + (n+1) H(+)(in) = a plastoquinol + NADP(+) + n H(+)(out). NDH-1 shuttles electrons from an unknown electron donor, via FMN and iron-sulfur (Fe-S) centers, to quinones in the respiratory and/or the photosynthetic chain. The immediate electron acceptor for the enzyme in this species is believed to be plastoquinone. Couples the redox reaction to proton translocation, and thus conserves the redox energy in a proton gradient. Cyanobacterial NDH-1 also plays a role in inorganic carbon-concentration. This chain is NAD(P)H-quinone oxidoreductase subunit 3, found in Synechococcus sp. (strain CC9605).